The primary structure comprises 89 residues: Sodium channel toxin To13 (89 aa).

Positions 1 to 18 are cleaved as a signal peptide; it reads MKTLFLIITSFILLEVEG. Positions 20-87 constitute an LCN-type CS-alpha/beta domain; the sequence is KNGYPRDSKG…TWKNKEPKCK (68 aa). 4 disulfides stabilise this stretch: C30–C86, C34–C60, C45–C67, and C49–C69.

This sequence belongs to the long (4 C-C) scorpion toxin superfamily. Sodium channel inhibitor family. As to expression, expressed by the venom gland.

Its subcellular location is the secreted. Functionally, inhibits voltage-gated sodium channels (Nav). This Tityus obscurus (Amazonian scorpion) protein is Sodium channel toxin To13.